The sequence spans 155 residues: SsrA-binding protein (155 aa).

Belongs to the SmpB family.

It localises to the cytoplasm. Functionally, required for rescue of stalled ribosomes mediated by trans-translation. Binds to transfer-messenger RNA (tmRNA), required for stable association of tmRNA with ribosomes. tmRNA and SmpB together mimic tRNA shape, replacing the anticodon stem-loop with SmpB. tmRNA is encoded by the ssrA gene; the 2 termini fold to resemble tRNA(Ala) and it encodes a 'tag peptide', a short internal open reading frame. During trans-translation Ala-aminoacylated tmRNA acts like a tRNA, entering the A-site of stalled ribosomes, displacing the stalled mRNA. The ribosome then switches to translate the ORF on the tmRNA; the nascent peptide is terminated with the 'tag peptide' encoded by the tmRNA and targeted for degradation. The ribosome is freed to recommence translation, which seems to be the essential function of trans-translation. The sequence is that of SsrA-binding protein from Streptococcus pyogenes serotype M18 (strain MGAS8232).